Consider the following 735-residue polypeptide: MKVQEGLFLVAIFFSLACTQLVKGQHQPGENCQNKCGNITIEYPFGISSGCYYPGNESFSITCKEDRPHVLSDIEVANFNHSGQLQVLLNRSSTCYDEQGKKTEEDSSFTLENLSLSANNKLTAVGCNALSLLDTFGMQNYSTACLSLCDSPPEADGECNGRGCCRVDVSAPLDSYTFETTSGRIKHMTSFHDFSPCTYAFLVEDDKFNFSSTEDLLNLRNVMRFPVLLDWSVGNQTCEQVGSTSICGGNSTCLDSTPRNGYICRCNEGFDGNPYLSAGCQDVNECTTSSTIHRHNCSDPKTCRNKVGGFYCKCQSGYRLDTTTMSCKRKEFAWTTILLVTTIGFLVILLGVACIQQRMKHLKDTKLREQFFEQNGGGMLTQRLSGAGPSNVDVKIFTEDGMKKATNGYAESRILGQGGQGTVYKGILPDNSIVAIKKARLGDSSQVEQFINEVLVLSQINHRNVVKLLGCCLETEVPLLVYEFITNGTLFDHLHGSMIDSSLTWEHRLKIAIEVAGTLAYLHSSASIPIIHRDIKTANILLDVNLTAKVADFGASRLIPMDKEELETMVQGTLGYLDPEYYNTGLLNEKSDVYSFGVVLMELLSGQKALCFKRPQSSKHLVSYFATATKENRLDEIIGGEVMNEDNLKEIQEAARIAAECTRLMGEERPRMKEVAAKLEALRVEKTKHKWSDQYPEENEHLIGGHILSAQGETSSSIGYDSIKNVAILDIETGR.

The first 24 residues, 1–24 (MKVQEGLFLVAIFFSLACTQLVKG), serve as a signal peptide directing secretion. The Extracellular segment spans residues 25–331 (QHQPGENCQN…TTTMSCKRKE (307 aa)). N-linked (GlcNAc...) asparagine glycosylation is found at Asn-38, Asn-56, Asn-80, Asn-90, Asn-113, Asn-140, Asn-209, Asn-235, and Asn-250. Positions 67 to 254 (RPHVLSDIEV…SICGGNSTCL (188 aa)) are polygalacturonic acid-binding. In terms of domain architecture, EGF-like 1 spans 234 to 281 (GNQTCEQVGSTSICGGNSTCLDSTPRNGYICRCNEGFDGNPYLSAGCQ). 6 cysteine pairs are disulfide-bonded: Cys-238/Cys-253, Cys-247/Cys-264, Cys-266/Cys-280, Cys-286/Cys-303, Cys-297/Cys-312, and Cys-314/Cys-327. The region spanning 282–328 (DVNECTTSSTIHRHNCSDPKTCRNKVGGFYCKCQSGYRLDTTTMSCK) is the EGF-like 2; calcium-binding domain. Asn-296 carries an N-linked (GlcNAc...) asparagine glycan. A helical membrane pass occupies residues 332–352 (FAWTTILLVTTIGFLVILLGV). Topologically, residues 353-735 (ACIQQRMKHL…VAILDIETGR (383 aa)) are cytoplasmic. Thr-398 carries the phosphothreonine modification. The Protein kinase domain occupies 409–692 (YAESRILGQG…RVEKTKHKWS (284 aa)). ATP contacts are provided by residues 415–423 (LGQGGQGTV) and Lys-437. Position 482 is a phosphotyrosine (Tyr-482). Residue Asp-534 is the Proton acceptor of the active site. Residues Thr-568 and Thr-573 each carry the phosphothreonine modification. Residue Tyr-581 is modified to Phosphotyrosine.

It belongs to the protein kinase superfamily. Ser/Thr protein kinase family. Interacts with the glycine-rich proteins GRP3 and GRP3S, and the type 2C protein phosphatase KAPP. Component of a 500 kDa complex, composed of WAK1, GRP3 and KAPP. Interacts with the oxygen-evolving enhancer protein 2 (OEE2). Predominantly expressed in green tissues such as stems and leaves. Detected at organ junctions.

Its subcellular location is the membrane. The enzyme catalyses L-seryl-[protein] + ATP = O-phospho-L-seryl-[protein] + ADP + H(+). The catalysed reaction is L-threonyl-[protein] + ATP = O-phospho-L-threonyl-[protein] + ADP + H(+). Functionally, serine/threonine-protein kinase that may function as a signaling receptor of extracellular matrix component. Binding to pectin may have significance in the control of cell expansion, morphogenesis and development. Required during plant's response to pathogen infection and in plant defense against heavy metal toxicity. Phosphorylates the oxygen-evolving enhancer protein 2 (OEE2) in an GRP-3-dependent manner. The chain is Wall-associated receptor kinase 1 (WAK1) from Arabidopsis thaliana (Mouse-ear cress).